Reading from the N-terminus, the 434-residue chain is RNA polymerase II holoenzyme cyclin-like subunit (434 aa).

A Cyclin N-terminal domain is found at 23 to 155 (EARRRVLLLE…LIEEMDSYLL (133 aa)). Over residues 248-278 (GSSTNPININNNNNTNTSNNNGTTSTTTTTT) the composition is skewed to low complexity. Disordered stretches follow at residues 248 to 292 (GSST…DNTE), 301 to 320 (LTKS…DIDN), and 330 to 362 (QIQN…GQIS). The span at 330 to 359 (QIQNQTQHQHQESTHNNTSSTNTGRNGING) shows a compositional bias: low complexity.

This sequence belongs to the cyclin family. Cyclin C subfamily. In terms of assembly, component of the SRB8-11 complex, a regulatory module of the Mediator complex.

The protein localises to the nucleus. Functionally, component of the SRB8-11 complex. The SRB8-11 complex is a regulatory module of the Mediator complex which is itself involved in regulation of basal and activated RNA polymerase II-dependent transcription. The SRB8-11 complex may be involved in the transcriptional repression of a subset of genes regulated by Mediator. It may inhibit the association of the Mediator complex with RNA polymerase II to form the holoenzyme complex. The SRB8-11 complex phosphorylates the C-terminal domain (CTD) of the largest subunit of RNA polymerase II. The polypeptide is RNA polymerase II holoenzyme cyclin-like subunit (SSN8) (Candida albicans (strain SC5314 / ATCC MYA-2876) (Yeast)).